Here is a 155-residue protein sequence, read N- to C-terminus: uncharacterized protein (155 aa).

4 helical membrane passes run 25–45, 50–70, 91–111, and 118–138; these read LPMG…FGWT, IFWF…IMTS, GVKI…ESLF, and WGCT…PILF.

Belongs to the major facilitator superfamily. CAR1 family.

The protein resides in the membrane. This is an uncharacterized protein from Schizosaccharomyces pombe (strain 972 / ATCC 24843) (Fission yeast).